Reading from the N-terminus, the 350-residue chain is D-alanine--D-alanine ligase (350 aa).

In terms of domain architecture, ATP-grasp spans 134–337; sequence KIFAAQRGVK…LPKKHSIKVS (204 aa). Residue 160 to 212 coordinates ATP; that stretch reads IAYPIILKPARLGSSIGVSVINEEKELDYGRDLAFEYDDTIIAESFKSGVKEY. Residues aspartate 289, glutamate 301, and asparagine 303 each coordinate Mg(2+).

It belongs to the D-alanine--D-alanine ligase family. It depends on Mg(2+) as a cofactor. Mn(2+) serves as cofactor.

Its subcellular location is the cytoplasm. The catalysed reaction is 2 D-alanine + ATP = D-alanyl-D-alanine + ADP + phosphate + H(+). The protein operates within cell wall biogenesis; peptidoglycan biosynthesis. In terms of biological role, cell wall formation. This is D-alanine--D-alanine ligase from Helicobacter hepaticus (strain ATCC 51449 / 3B1).